Reading from the N-terminus, the 260-residue chain is Triosephosphate isomerase (260 aa).

11–13 is a substrate binding site; that stretch reads NWK. The Electrophile role is filled by His-103. Residue Glu-175 is the Proton acceptor of the active site. Residues Gly-181, Ser-220, and 241–242 contribute to the substrate site; that span reads GG.

Belongs to the triosephosphate isomerase family. Homodimer.

The protein resides in the cytoplasm. The enzyme catalyses D-glyceraldehyde 3-phosphate = dihydroxyacetone phosphate. It functions in the pathway carbohydrate biosynthesis; gluconeogenesis. The protein operates within carbohydrate degradation; glycolysis; D-glyceraldehyde 3-phosphate from glycerone phosphate: step 1/1. Its function is as follows. Involved in the gluconeogenesis. Catalyzes stereospecifically the conversion of dihydroxyacetone phosphate (DHAP) to D-glyceraldehyde-3-phosphate (G3P). The polypeptide is Triosephosphate isomerase (Shewanella sp. (strain MR-7)).